Reading from the N-terminus, the 551-residue chain is HTH-type transcriptional regulator SgrR (551 aa).

One can recognise an HTH marR-type domain in the interval 1-116; it reads MPSARLQQQF…LVSHLGRSFR (116 aa). The segment at residues 26–49 is a DNA-binding region (H-T-H motif); that stretch reads LNELAALLSCSRRHMRTLLNTMQD. A solute-binding region spans residues 163–492; that stretch reads ELEADIAHHW…IDWQADAARW (330 aa).

Activates the small RNA gene sgrS under glucose-phosphate stress conditions as well as yfdZ. Represses its own transcription under both stress and non-stress conditions. Might act as a sensor of the intracellular accumulation of phosphoglucose by binding these molecules in its C-terminal solute-binding domain. This is HTH-type transcriptional regulator SgrR from Escherichia coli O6:K15:H31 (strain 536 / UPEC).